A 148-amino-acid polypeptide reads, in one-letter code: D-aminoacyl-tRNA deacylase (148 aa).

The short motif at 137-138 (GP) is the Gly-cisPro motif, important for rejection of L-amino acids element.

Belongs to the DTD family. In terms of assembly, homodimer.

It is found in the cytoplasm. It catalyses the reaction glycyl-tRNA(Ala) + H2O = tRNA(Ala) + glycine + H(+). It carries out the reaction a D-aminoacyl-tRNA + H2O = a tRNA + a D-alpha-amino acid + H(+). Its function is as follows. An aminoacyl-tRNA editing enzyme that deacylates mischarged D-aminoacyl-tRNAs. Also deacylates mischarged glycyl-tRNA(Ala), protecting cells against glycine mischarging by AlaRS. Acts via tRNA-based rather than protein-based catalysis; rejects L-amino acids rather than detecting D-amino acids in the active site. By recycling D-aminoacyl-tRNA to D-amino acids and free tRNA molecules, this enzyme counteracts the toxicity associated with the formation of D-aminoacyl-tRNA entities in vivo and helps enforce protein L-homochirality. The polypeptide is D-aminoacyl-tRNA deacylase (Finegoldia magna (strain ATCC 29328 / DSM 20472 / WAL 2508) (Peptostreptococcus magnus)).